Here is a 193-residue protein sequence, read N- to C-terminus: Superoxide dismutase [Fe] (193 aa).

4 residues coordinate Fe cation: histidine 27, histidine 74, aspartate 157, and histidine 161.

Belongs to the iron/manganese superoxide dismutase family. As to quaternary structure, monomer. Requires Fe cation as cofactor.

It carries out the reaction 2 superoxide + 2 H(+) = H2O2 + O2. Functionally, destroys superoxide anion radicals which are normally produced within the cells and which are toxic to biological systems. Involved in the metabolism of 4-aminophenol. May have an indirect role in hydroxyquinol metabolism by scavenging and detoxifying reactive species that promote its auto-oxidation. This Burkholderia sp protein is Superoxide dismutase [Fe].